We begin with the raw amino-acid sequence, 616 residues long: Chaperone protein HscA (616 aa).

This sequence belongs to the heat shock protein 70 family.

Functionally, chaperone involved in the maturation of iron-sulfur cluster-containing proteins. Has a low intrinsic ATPase activity which is markedly stimulated by HscB. Involved in the maturation of IscU. This chain is Chaperone protein HscA, found in Enterobacter sp. (strain 638).